We begin with the raw amino-acid sequence, 595 residues long: Protein UL31 (595 aa).

The signal sequence occupies residues 1 to 23 (MGDKPTLVTLLTVAVSSPPPSSP). The interval 47-94 (TATSEVGEKTAEQEVAAADPETGNERRENRENEGGETRTTGTTAVKRS) is disordered. The span at 69 to 82 (GNERRENRENEGGE) shows a compositional bias: basic and acidic residues. Asparagine 176 and asparagine 197 each carry an N-linked (GlcNAc...) asparagine; by host glycan.

It belongs to the herpesviridae U10 family. As to quaternary structure, interacts with host CGAS.

The protein resides in the host cytoplasm. The protein localises to the host nucleus. In terms of biological role, plays a role in the inhibition of host innate immune system by targeting host CGAS and promoting dissociation of DNA from CGAS, thereby inhibiting the enzymatic activity of CGAS. This chain is Protein UL31, found in Homo sapiens (Human).